We begin with the raw amino-acid sequence, 858 residues long: Lysine-specific demethylase JMJ706 (858 aa).

The JmjN domain maps to 103–144 (CPVYYPTKEEFEDPIGYIQKIAPVASKYGICKIVSPVSASVP). Residues 250 to 420 (KSNWNLKNFS…LGSVASRRYA (171 aa)) enclose the JmjC domain. His293, Glu295, and His388 together coordinate Fe cation. Basic and acidic residues predominate over residues 737 to 746 (QHNKRPEDYG). 2 disordered regions span residues 737–791 (QHNK…SAKQ) and 829–858 (SSST…WPAI). A compositionally biased stretch (polar residues) spans 829–844 (SSSTNRVVEQGSSGQR).

It depends on Fe(2+) as a cofactor.

The protein resides in the nucleus. The enzyme catalyses N(6),N(6),N(6)-trimethyl-L-lysyl(9)-[histone H3] + 2 2-oxoglutarate + 2 O2 = N(6)-methyl-L-lysyl(9)-[histone H3] + 2 formaldehyde + 2 succinate + 2 CO2. In terms of biological role, histone demethylase that demethylates 'Lys-9' (H3K9me) of histone H3 with a specific activity for H3K9me3 and H3K9me2. No activity on H3K4me3, H3K9me1, H3K27me2 and H3K36me3/2. Involved in the control of floral organ development by demethylating H3K9me3 and H3K9me2 in the promoter regions of DH1 and MADS47. The 'Lys-9' demethylation of these two genes is required for induction of their expression. The polypeptide is Lysine-specific demethylase JMJ706 (JMJ706) (Oryza sativa subsp. japonica (Rice)).